The sequence spans 887 residues: Phosphatidylinositol 3-kinase catalytic subunit type 3 (887 aa).

Residues 35–184 enclose the C2 PI3K-type domain; the sequence is YKAVLEDPML…LAKLTKAHRQ (150 aa). The tract at residues 149-170 is disordered; that stretch reads VEADGSEPTKTPGRTSSTLSED. Over residues 156 to 170 the composition is skewed to polar residues; the sequence is PTKTPGRTSSTLSED. T163 is subject to Phosphothreonine; by AMPK. S165 is modified (phosphoserine; by AMPK). A phosphoserine mark is found at S244, S261, and S282. A PIK helical domain is found at 283 to 520; it reads DHDLKPNAAT…PKTHEMYLNV (238 aa). Residues 447 to 467 are disordered; sequence TSPLPSVSSPPPASKTKEVPD. The PI3K/PI4K catalytic domain maps to 605–871; the sequence is IPETATLFKS…LIDESVHALF (267 aa). The segment at 611 to 617 is G-loop; that stretch reads LFKSALM. Residues 740 to 748 form a catalytic loop region; the sequence is GVGDRHLDN. The interval 759-780 is activation loop; it reads HIDFGYILGRDPKPLPPPMKLN.

The protein belongs to the PI3/PI4-kinase family. Component of the PI3K (PI3KC3/PI3K-III/class III phosphatidylinositol 3-kinase) complex the core of which is composed of the catalytic subunit PIK3C3, the regulatory subunit PIK3R4 and BECN1 associating with additional regulatory/auxiliary subunits to form alternative complex forms. Alternative complex forms containing a fourth regulatory subunit in a mutually exclusive manner are: the PI3K complex I (PI3KC3-C1) containing ATG14, and the PI3K complex II (PI3KC3-C2) containing UVRAG. PI3KC3-C1 displays a V-shaped architecture with PIK3R4 serving as a bridge between PIK3C3 and the ATG14:BECN1 subcomplex. Both, PI3KC3-C1 and PI3KC3-C2, can associate with further regulatory subunits such as RUBCN, SH3GLB1/Bif-1 and AMBRA1. PI3KC3-C1 probably associates with PIK3CB. Interacts with RAB7A in the presence of PIK3R4. Interacts with AMBRA1. Interacts with BECN1P1/BECN2. Interacts with SLAMF1. May be a component of a complex composed of RAB5A (in GDP-bound form), DYN2 and PIK3C3. Interacts with NCKAP1L. Interacts with ATG14; this interaction is increased in the absence of TMEM39A. Interacts with STEEP1; the interaction is STING1-dependent and required for trafficking of STING1 from the endoplasmic reticulum. Interacts with YWHAG. Interacts with ARMC3. It depends on Mn(2+) as a cofactor. Ubiquitinated via 'Lys-29'- and 'Lys-48'-linked ubiquitination by UBE3C, promoting its degradation. Deubiquitination by ZRANB1/TRABID promotes its stabilization, leading to autophagosome maturation. As to expression, ubiquitously expressed, with a highest expression in skeletal muscle.

Its subcellular location is the midbody. It is found in the late endosome. It localises to the cytoplasmic vesicle. The protein localises to the autophagosome. The catalysed reaction is a 1,2-diacyl-sn-glycero-3-phospho-(1D-myo-inositol) + ATP = a 1,2-diacyl-sn-glycero-3-phospho-(1D-myo-inositol-3-phosphate) + ADP + H(+). In terms of biological role, catalytic subunit of the PI3K complex that mediates formation of phosphatidylinositol 3-phosphate; different complex forms are believed to play a role in multiple membrane trafficking pathways: PI3KC3-C1 is involved in initiation of autophagosomes and PI3KC3-C2 in maturation of autophagosomes and endocytosis. As part of PI3KC3-C1, promotes endoplasmic reticulum membrane curvature formation prior to vesicle budding. Involved in regulation of degradative endocytic trafficking and required for the abscission step in cytokinesis, probably in the context of PI3KC3-C2. Involved in the transport of lysosomal enzyme precursors to lysosomes. Required for transport from early to late endosomes. Its function is as follows. (Microbial infection) Kinase activity is required for SARS coronavirus-2/SARS-CoV-2 replication. In Homo sapiens (Human), this protein is Phosphatidylinositol 3-kinase catalytic subunit type 3.